A 352-amino-acid polypeptide reads, in one-letter code: MASMNFSPPEYPDYGTATLDPNIFVDESLNTPKLSVPDMIALVIFVMVFLVGVPGNFLVVWVTGFEVRRTINAIWFLNLAVADLLSCLALPILFSSIVQQGYWPFGNAACRILPSLILLNMYASILLLTTISADRFVLVFNPIWCQNYRGPQLAWAACSVAWAVALLLTVPSFIFRGVHTEYFPFWMTCGVDYSGVGVLVERGVAILRLLMGFLGPLVILSICYTFLLIRTWSRKATRSTKTLKVVVAVVVSFFVLWLPYQVTGMMMALFYKHSESFRRVSRLDSLCVAVAYINCCINPIIYVLAAQGFHSRFLKSLPARLRQVLAEESVGRDSKSITLSTVDTPAQKSQGV.

The Extracellular portion of the chain corresponds to 1–38 (MASMNFSPPEYPDYGTATLDPNIFVDESLNTPKLSVPD). A sulfotyrosine mark is found at Tyr11 and Tyr14. Residues 39-65 (MIALVIFVMVFLVGVPGNFLVVWVTGF) form a helical membrane-spanning segment. Residues 66 to 70 (EVRRT) lie on the Cytoplasmic side of the membrane. A helical transmembrane segment spans residues 71–94 (INAIWFLNLAVADLLSCLALPILF). Residues 95–111 (SSIVQQGYWPFGNAACR) lie on the Extracellular side of the membrane. Residues Cys110 and Cys189 are joined by a disulfide bond. The helical transmembrane segment at 112–133 (ILPSLILLNMYASILLLTTISA) threads the bilayer. Residues 134–154 (DRFVLVFNPIWCQNYRGPQLA) lie on the Cytoplasmic side of the membrane. The helical transmembrane segment at 155–175 (WAACSVAWAVALLLTVPSFIF) threads the bilayer. At 176–202 (RGVHTEYFPFWMTCGVDYSGVGVLVER) the chain is on the extracellular side. A helical membrane pass occupies residues 203 to 228 (GVAILRLLMGFLGPLVILSICYTFLL). At 229-244 (IRTWSRKATRSTKTLK) the chain is on the cytoplasmic side. Residues 245–267 (VVVAVVVSFFVLWLPYQVTGMMM) traverse the membrane as a helical segment. The Extracellular portion of the chain corresponds to 268–284 (ALFYKHSESFRRVSRLD). A helical transmembrane segment spans residues 285–305 (SLCVAVAYINCCINPIIYVLA). At 306–352 (AQGFHSRFLKSLPARLRQVLAEESVGRDSKSITLSTVDTPAQKSQGV) the chain is on the cytoplasmic side. Phosphoserine is present on residues Ser316, Ser329, Ser334, Ser336, and Ser340.

It belongs to the G-protein coupled receptor 1 family. In terms of assembly, homodimer. May also form higher-order oligomers. Interacts (when phosphorylated) with ARRB1 and ARRB2; the interaction is associated with internalization of C5aR. Sulfation plays a critical role in the association of C5aR with C5a, but no significant role in the ability of the receptor to transduce a signal and mobilize calcium in response to a small peptide agonist. In terms of processing, phosphorylated on serine residues in response to C5a binding, resulting in internalization of the receptor and short-term desensitization to C5a.

The protein localises to the cell membrane. The protein resides in the cytoplasmic vesicle. Functionally, receptor for the chemotactic and inflammatory peptide anaphylatoxin C5a. The ligand interacts with at least two sites on the receptor: a high-affinity site on the extracellular N-terminus, and a second site in the transmembrane region which activates downstream signaling events. Receptor activation stimulates chemotaxis, granule enzyme release, intracellular calcium release and superoxide anion production. The polypeptide is C5a anaphylatoxin chemotactic receptor 1 (C5AR1) (Canis lupus familiaris (Dog)).